Here is a 564-residue protein sequence, read N- to C-terminus: MTHTSSSNPRLDESRTIIAPTGTALTAKSWLTEAPLRMLMNNLHPDVAEHPHALVVYGGIGRAARNWQCYDKIVEVLTRLEDDETLLVQSGKPVGVFKTHTNAPRVLIANSNIVPHWANWEHFNELDKQGLMMYGQMTAGSWIYIGSQGIVQGTYETFVAMARQHFDGKAAGRWVLTGGLGGMGGAQPLAATMAGFSMLAVECDESRIDYRLRTGYVDRKATTLDEALAIIEESKQSGTPVSVGLLGNAADVYADIVQRGIVPDITTDQTSAHDPLNGYLPQGWSMEQAAEMRLKDEPAVVIAAKKSMAIQVQAMLDLQKSGSATVDYGNNIRQMALEEGVANAFDFPGFVPAYIRPLFCEGIGPFRWAALSGDPEDIYKTDQKVKELIPDNPHLHNWLDMARERIQFQGLPARICWVGLKDRARLGKAFNEMVKNGELKAPIVIGRDHLDSGSVASPNRETEGMMDGSDAVSDWPLLNALLNTASGATWVSLHHGGGVGMGFSQHSGMVIVCDGTDDAAERVGRVLHNDPATGVMRHADAGYDIAINCAKEQNLDLPMLSEPK.

NAD(+) contacts are provided by residues 58–59 (GG), Gln136, 182–184 (GMG), Glu202, Arg207, 248–249 (NA), 269–273 (QTSAH), 279–280 (YL), and Tyr328. Residue Cys416 is part of the active site. Gly498 contributes to the NAD(+) binding site.

The protein belongs to the urocanase family. NAD(+) is required as a cofactor.

The protein resides in the cytoplasm. It catalyses the reaction 4-imidazolone-5-propanoate = trans-urocanate + H2O. The protein operates within amino-acid degradation; L-histidine degradation into L-glutamate; N-formimidoyl-L-glutamate from L-histidine: step 2/3. Catalyzes the conversion of urocanate to 4-imidazolone-5-propionate. The polypeptide is Urocanate hydratase (Aliivibrio salmonicida (strain LFI1238) (Vibrio salmonicida (strain LFI1238))).